The primary structure comprises 756 residues: Phosphoinositide 3-kinase regulatory subunit 6 (756 aa).

Disordered stretches follow at residues 570–589 (SKSP…EGTG) and 716–738 (CSRT…EKNM). The span at 717-731 (SRTQKSKTSALNSHG) shows a compositional bias: polar residues.

As to quaternary structure, heterodimer of a catalytic subunit (PIK3CG) and a regulatory (PIK3R6) subunit. The binding of PIK3R6 to PIK3CG may exclude the binding of PIK3R5 to PIK3CG. Interacts with beta-gamma G protein dimers. Interacts with PDE3B and RAPGEF3; form a signaling complex that regulates phosphatidylinositol 3-kinase gamma in angiogenesis. Highly expressed in heart. In a lower extent, also expressed in brain, spleen, lung, liver, kidney, prostate, thyroid, salivary gland, dendritic cells, macrophages and neutrophils.

The protein localises to the cytoplasm. It localises to the cell membrane. In terms of biological role, regulatory subunit of the PI3K gamma complex. Acts as an adapter to drive activation of PIK3CG by beta-gamma G protein dimers. The PIK3CG:PIK3R6 heterodimer is much less sensitive to beta-gamma G proteins than PIK3CG:PIK3R5 and its membrane recruitment and beta-gamma G protein dimer-dependent activation requires HRAS bound to PIK3CG. Recruits of the PI3K gamma complex to a PDE3B:RAPGEF3 signaling complex involved in angiogenesis; signaling seems to involve RRAS. The sequence is that of Phosphoinositide 3-kinase regulatory subunit 6 (Pik3r6) from Mus musculus (Mouse).